The sequence spans 833 residues: MNNLSSQNIGTSLDFQESPGEFEEEEEREEDDSSEISSLPPLTQVATASPRMIVSPKMQNIHLIIQNEDNDSSEVNTPHEDWHANLGLGIQSQPLRNERNVEEHYRTRAKRQTILWAENQAEEDTMTQERVRAEAELQVKFEGARAKAEARAEAEASSRAGLSTGVNGANRTVEDTKSTGEQDEMTRKTAERERRLRAEKERLLIEEDARKKAVQVKLEKEKEEEEEGKAAAGRTTAAPETPEDQEAQRIAVEIVQGIYKKISHTEYANFLGTKENHRILKRFIILLEPLPNSLVLSLYKLVTRIYFIAEAQAIDRILEELSIRWTTTNPATHWGSHYNLCHIVLFSLLILNSDLHNAENNQPKFSKEEFTENTLFAVEKESSKSNFDLAQHEPGIREELGVYYEALKYMSLPLLKKDENKTNVRDSRDSKDTRIRIRRRNSKMSTRSQLNNSTENSSSDDDTSVISSSSPSARREPHYTSNWKFHHNKPLPRLYRKEPLDEVFVFSNGTSWCVDSGIKMNERDLASSSNNKSTAQRTTRSRIPSSAGGIFRWITRSKSKSLLHGNKSPVAFFDGNTKWINVRCRVCEGRIYVFKHYPPSMGPQNSMQDLDGMKKASDVYFVCSLYESLATLVQDNVVVNNNHEPSRRGDLDQRGNFTVIIPASLHRKKTLLEFQTSNVEEAQRFVQCVNFWAARLTPVPTAQFEIVSNEENGWSPRVLSGDLPIETLETLYLSDWRPLLSISHLYSEQENSTEETNMVDKIEVLESFAEYLQRTIDSHNTVKPLMISRWRRTRNFERAMDNWNKKYLYLNELNERTSVYLNALQLAQRSVKH.

A compositionally biased stretch (polar residues) spans 1-15; it reads MNNLSSQNIGTSLDF. Disordered stretches follow at residues 1–51, 152–194, 215–246, and 420–483; these read MNNL…ASPR, AEAE…ERER, QVKL…EDQE, and NKTN…TSNW. Acidic residues predominate over residues 20–34; the sequence is GEFEEEEEREEDDSS. Basic and acidic residues predominate over residues 172 to 194; that stretch reads TVEDTKSTGEQDEMTRKTAERER. In terms of domain architecture, SEC7 spans 185-410; that stretch reads MTRKTAERER…GVYYEALKYM (226 aa). Positions 230–240 are enriched in low complexity; it reads AAAGRTTAAPE. Over residues 420-435 the composition is skewed to basic and acidic residues; it reads NKTNVRDSRDSKDTRI. Residues 548 to 696 form the PH domain; it reads GGIFRWITRS…QCVNFWAARL (149 aa).

This sequence belongs to the YEL1 family.

It localises to the cytoplasm. The protein localises to the cell membrane. It is found in the bud neck. The protein resides in the bud tip. Guanine nucleotide exchange factor for ARF3 required for localization of ARF3 to the bud neck and tip and involved in actin patch polarization. The sequence is that of Guanine-nucleotide exchange factor YEL1 (YEL1) from Zygosaccharomyces rouxii (strain ATCC 2623 / CBS 732 / NBRC 1130 / NCYC 568 / NRRL Y-229).